The primary structure comprises 148 residues: Glutamyl-tRNA(Gln) amidotransferase subunit C, mitochondrial (148 aa).

The N-terminal 10 residues, 1–10 (MLRLLNKRFY), are a transit peptide targeting the mitochondrion.

This sequence belongs to the GatC family. As to quaternary structure, subunit of the heterotrimeric GatCAB amidotransferase (AdT) complex, composed of A, B and C subunits.

The protein localises to the mitochondrion. It carries out the reaction L-glutamyl-tRNA(Gln) + L-glutamine + ATP + H2O = L-glutaminyl-tRNA(Gln) + L-glutamate + ADP + phosphate + H(+). Functionally, allows the formation of correctly charged Gln-tRNA(Gln) through the transamidation of misacylated Glu-tRNA(Gln) in the mitochondria. The reaction takes place in the presence of glutamine and ATP through an activated gamma-phospho-Glu-tRNA(Gln). This Drosophila ananassae (Fruit fly) protein is Glutamyl-tRNA(Gln) amidotransferase subunit C, mitochondrial.